Consider the following 3061-residue polypeptide: Genome polyprotein (3061 aa).

In terms of domain architecture, Peptidase S30 spans 141 to 284 (KLTEGQMNHL…QGVMDSMVQF (144 aa)). Active-site for P1 proteinase activity residues include His-192, Asp-201, and Ser-235. Positions 334–337 (KITC) match the Involved in interaction with stylet and aphid transmission motif. Positions 592 to 594 (PTK) match the Involved in virions binding and aphid transmission motif. The region spanning 618-740 (LYIARQGFCY…ESDIKHYRVG (123 aa)) is the Peptidase C6 domain. Active-site for helper component proteinase activity residues include Cys-626 and His-699. The 153-residue stretch at 1229–1381 (DIAHSEHLDF…TQQPVKLIVE (153 aa)) folds into the Helicase ATP-binding domain. Position 1242–1249 (1242–1249 (GAVGSGKS)) interacts with ATP. The DECH box motif lies at 1331–1334 (DECH). The Helicase C-terminal domain maps to 1400–1559 (DVVQFGSNVL…NLPVMTGGVS (160 aa)). Positions 1884–1892 (RKKGKGKGT) match the Nuclear localization signal motif. Tyr-1907 is modified (O-(5'-phospho-RNA)-tyrosine). The Peptidase C4 domain maps to 2032-2250 (AKSLMRGLRD…VLWGPLKLKE (219 aa)). Active-site for nuclear inclusion protein A activity residues include His-2077, Asp-2112, and Cys-2182. The 125-residue stretch at 2517–2641 (WVYCDADGSQ…AVNPEKESIL (125 aa)) folds into the RdRp catalytic domain. Residues 2795 to 2835 (GNDTIDAGGSTKKDAKQEQGSIQPNLNKEKEKDVNVGTSGT) are disordered. Thr-3044 is modified (phosphothreonine).

This sequence belongs to the potyviridae genome polyprotein family. Interacts with host eIF4E protein (via cap-binding region); this interaction mediates the translation of the VPg-viral RNA conjugates. Part of a complex that comprises VPg, RNA, host EIF4E and EIF4G; this interaction mediates the translation of the VPg-viral RNA conjugates. In terms of processing, VPg is uridylylated by the polymerase and is covalently attached to the 5'-end of the genomic RNA. This uridylylated form acts as a nucleotide-peptide primer for the polymerase. Potyviral RNA is expressed as two polyproteins which undergo post-translational proteolytic processing. Genome polyprotein is processed by NIa-pro, P1 and HC-pro proteinases resulting in the production of at least ten individual proteins. P3N-PIPO polyprotein is cleaved by P1 and HC-pro proteinases resulting in the production of three individual proteins. The P1 proteinase and the HC-pro cleave only their respective C-termini autocatalytically. 6K1 is essential for proper proteolytic separation of P3 from CI.

It localises to the host cytoplasmic vesicle. Its subcellular location is the host nucleus. The protein localises to the virion. The enzyme catalyses RNA(n) + a ribonucleoside 5'-triphosphate = RNA(n+1) + diphosphate. It catalyses the reaction Hydrolyzes glutaminyl bonds, and activity is further restricted by preferences for the amino acids in P6 - P1' that vary with the species of potyvirus, e.g. Glu-Xaa-Xaa-Tyr-Xaa-Gln-|-(Ser or Gly) for the enzyme from tobacco etch virus. The natural substrate is the viral polyprotein, but other proteins and oligopeptides containing the appropriate consensus sequence are also cleaved.. The catalysed reaction is Hydrolyzes a Gly-|-Gly bond at its own C-terminus, commonly in the sequence -Tyr-Xaa-Val-Gly-|-Gly, in the processing of the potyviral polyprotein.. Its function is as follows. Required for aphid transmission and also has proteolytic activity. Only cleaves a Gly-Gly dipeptide at its own C-terminus. Interacts with virions and aphid stylets. Acts as a suppressor of RNA-mediated gene silencing, also known as post-transcriptional gene silencing (PTGS), a mechanism of plant viral defense that limits the accumulation of viral RNAs. May have RNA-binding activity. Functionally, has helicase activity. It may be involved in replication. In terms of biological role, indispensable for virus replication. Reduces the abundance of host transcripts related to jasmonic acid biosynthesis therefore altering the host defenses. In order to increase its own stability, decreases host protein degradation pathways. Indispensable for virus replication. Its function is as follows. Mediates the cap-independent, EIF4E-dependent translation of viral genomic RNAs. Binds to the cap-binding site of host EIF4E and thus interferes with the host EIF4E-dependent mRNA export and translation. VPg-RNA directly binds EIF4E and is a template for transcription. Also forms trimeric complexes with EIF4E-EIF4G, which are templates for translation. Functionally, has RNA-binding and proteolytic activities. In terms of biological role, an RNA-dependent RNA polymerase that plays an essential role in the virus replication. Involved in aphid transmission, cell-to-cell and systemis movement, encapsidation of the viral RNA and in the regulation of viral RNA amplification. The chain is Genome polyprotein from Potato virus Y (strain Hungarian) (PVY).